The primary structure comprises 355 residues: Erythronate-4-phosphate dehydrogenase (355 aa).

Substrate contacts are provided by Ser45 and Thr66. Residue Asp146 participates in NAD(+) binding. Arg206 is an active-site residue. Asp229 provides a ligand contact to NAD(+). Glu234 is an active-site residue. Catalysis depends on His251, which acts as the Proton donor. Residue Gly254 participates in NAD(+) binding. Tyr255 is a binding site for substrate.

The protein belongs to the D-isomer specific 2-hydroxyacid dehydrogenase family. PdxB subfamily. As to quaternary structure, homodimer.

It localises to the cytoplasm. It catalyses the reaction 4-phospho-D-erythronate + NAD(+) = (R)-3-hydroxy-2-oxo-4-phosphooxybutanoate + NADH + H(+). Its pathway is cofactor biosynthesis; pyridoxine 5'-phosphate biosynthesis; pyridoxine 5'-phosphate from D-erythrose 4-phosphate: step 2/5. In terms of biological role, catalyzes the oxidation of erythronate-4-phosphate to 3-hydroxy-2-oxo-4-phosphonooxybutanoate. This chain is Erythronate-4-phosphate dehydrogenase, found in Acinetobacter baumannii (strain ATCC 17978 / DSM 105126 / CIP 53.77 / LMG 1025 / NCDC KC755 / 5377).